The primary structure comprises 378 residues: Anhydro-N-acetylmuramic acid kinase (378 aa).

23 to 30 (GTSMDGAD) contributes to the ATP binding site.

This sequence belongs to the anhydro-N-acetylmuramic acid kinase family.

It carries out the reaction 1,6-anhydro-N-acetyl-beta-muramate + ATP + H2O = N-acetyl-D-muramate 6-phosphate + ADP + H(+). It functions in the pathway amino-sugar metabolism; 1,6-anhydro-N-acetylmuramate degradation. It participates in cell wall biogenesis; peptidoglycan recycling. Catalyzes the specific phosphorylation of 1,6-anhydro-N-acetylmuramic acid (anhMurNAc) with the simultaneous cleavage of the 1,6-anhydro ring, generating MurNAc-6-P. Is required for the utilization of anhMurNAc either imported from the medium or derived from its own cell wall murein, and thus plays a role in cell wall recycling. In Bordetella pertussis (strain Tohama I / ATCC BAA-589 / NCTC 13251), this protein is Anhydro-N-acetylmuramic acid kinase.